The following is a 217-amino-acid chain: Large ribosomal subunit protein uL1 (217 aa).

N6,N6-dimethyllysine; alternate is present on K122. The residue at position 122 (K122) is an N6-methyllysine; alternate.

It belongs to the universal ribosomal protein uL1 family.

The chain is Large ribosomal subunit protein uL1 (rpl10a) from Dictyostelium discoideum (Social amoeba).